The following is an 850-amino-acid chain: Receptor-like serine/threonine-protein kinase SD1-8 (850 aa).

Residues 1-26 form the signal peptide; it reads MRGLPNFYHSYTFFFFFLLILFPAYS. Topologically, residues 27 to 441 are extracellular; that stretch reads ISANTLSASE…LEDKRNRSAK (415 aa). One can recognise a Bulb-type lectin domain in the interval 31 to 153; the sequence is TLSASESLTI…KNSAPDGVLW (123 aa). N-linked (GlcNAc...) asparagine glycosylation is found at N43, N118, and N242. Residues 292–328 enclose the EGF-like domain; sequence PKDQCDEYKECGVYGYCDSNTSPVCNCIKGFKPRNPQ. Cystine bridges form between C296–C308, C302–C316, C378–C403, and C382–C388. In terms of domain architecture, PAN spans 347 to 428; the sequence is CGGGDGFVRL…GGQDLYVRLA (82 aa). N-linked (GlcNAc...) asparagine glycans are attached at residues N387 and N437. Residues 442-462 traverse the membrane as a helical segment; sequence IIGSSIGVSVLLLLSFIIFFL. Residues 463 to 850 lie on the Cytoplasmic side of the membrane; sequence WKRKQKRSIL…QITVSVLDAR (388 aa). The region spanning 526-807 is the Protein kinase domain; the sequence is FSNANKLGQG…LMLGSESTTI (282 aa). ATP-binding positions include 532-540 and K554; that span reads LGQGGFGIV. Residues 615 to 632 are caM-binding; sequence SRNSKLNWQMRFDIINGI. Residue D651 is the Proton acceptor of the active site.

Belongs to the protein kinase superfamily. Ser/Thr protein kinase family. In terms of assembly, interacts with PUB9, PUB13, PUB14 and PUB38. As to expression, expressed in the root-hypocotyl transition zone, at the base of lateral roots, axillary buds and pedicels.

The protein localises to the cell membrane. It catalyses the reaction L-seryl-[protein] + ATP = O-phospho-L-seryl-[protein] + ADP + H(+). The enzyme catalyses L-threonyl-[protein] + ATP = O-phospho-L-threonyl-[protein] + ADP + H(+). Involved in the regulation of cellular expansion and differentiation. This is Receptor-like serine/threonine-protein kinase SD1-8 (SD18) from Arabidopsis thaliana (Mouse-ear cress).